A 706-amino-acid polypeptide reads, in one-letter code: Frizzled-6 (706 aa).

The N-terminal stretch at 1–18 (MEMFTFLLTCIFLPLLRG) is a signal peptide. Residues 19–132 (HSLFTCEPIT…CDRLQYCDET (114 aa)) form the FZ domain. At 19 to 201 (HSLFTCEPIT…SDELEFAKSF (183 aa)) the chain is on the extracellular side. 5 cysteine pairs are disulfide-bonded: Cys-24/Cys-85, Cys-32/Cys-78, Cys-69/Cys-106, Cys-95/Cys-129, and Cys-99/Cys-123. Asn-38 carries N-linked (GlcNAc...) asparagine glycosylation. The helical transmembrane segment at 202-222 (IGTVSIFCLCATLFTFLTFLI) threads the bilayer. The Cytoplasmic segment spans residues 223-233 (DVRRFRYPERP). A helical membrane pass occupies residues 234–254 (IIYYSVCYSIVSLMYFIGFLL). Residues 255-284 (GDSTACNKADEKLELGDTVVLGSQNKACTV) lie on the Extracellular side of the membrane. A helical transmembrane segment spans residues 285 to 305 (LFMLLYFFTMAGTVWWVILTI). The Cytoplasmic portion of the chain corresponds to 306-324 (TWFLAAGRKWSCEAIEQKA). Residues 325–345 (VWFHAVAWGTPGFLTVMLLAM) form a helical membrane-spanning segment. Residues 346–370 (NKVEGDNISGVCFVGLYDLDASRYF) lie on the Extracellular side of the membrane. The N-linked (GlcNAc...) asparagine glycan is linked to Asn-352. The chain crosses the membrane as a helical span at residues 371–391 (VLLPLCLCVFVGLSLLLAGII). Residues 392-416 (SLNHVRQVIQHDGRNQEKLKKFMIR) lie on the Cytoplasmic side of the membrane. A helical transmembrane segment spans residues 417 to 437 (IGVFSGLYLVPLVTLLGCYVY). At 438–473 (EQVNRITWEITWVSDHCRQYHIPCPYQAKAKARPEL) the chain is on the extracellular side. Residues 474-494 (ALFMIKYLMTLIVGISAVFWV) form a helical membrane-spanning segment. Residues 495–706 (GSKKTCTEWA…EQGGGCHSDT (212 aa)) are Cytoplasmic-facing. The short motif at 498-503 (KTCTEW) is the Lys-Thr-X-X-X-Trp motif, mediates interaction with the PDZ domain of Dvl family members element. The disordered stretch occupies residues 588-706 (EIQTSPETSM…EQGGGCHSDT (119 aa)). A compositionally biased stretch (basic and acidic residues) spans 646 to 658 (ARSEGRISPKSDI). Residue Ser-653 is modified to Phosphoserine. A compositionally biased stretch (polar residues) spans 662–672 (GLAQSNNLQVP). Over residues 673–685 (SSSEPSSLKGSTS) the composition is skewed to low complexity. Over residues 694-706 (VRKEQGGGCHSDT) the composition is skewed to basic and acidic residues.

The protein belongs to the G-protein coupled receptor Fz/Smo family. As to quaternary structure, interacts with LMBR1L. Ubiquitinated by ZNRF3, leading to its degradation by the proteasome. Detected in adult heart, brain, placenta, lung, liver, skeletal muscle, kidney, pancreas, thymus, prostate, testis, ovary, small intestine and colon. In the fetus, expressed in brain, lung, liver and kidney.

It localises to the membrane. The protein localises to the cell membrane. The protein resides in the cell surface. Its subcellular location is the apical cell membrane. It is found in the cytoplasmic vesicle membrane. It localises to the endoplasmic reticulum membrane. Functionally, receptor for Wnt proteins. Most of frizzled receptors are coupled to the beta-catenin canonical signaling pathway, which leads to the activation of disheveled proteins, inhibition of GSK-3 kinase, nuclear accumulation of beta-catenin and activation of Wnt target genes. A second signaling pathway involving PKC and calcium fluxes has been seen for some family members, but it is not yet clear if it represents a distinct pathway or if it can be integrated in the canonical pathway, as PKC seems to be required for Wnt-mediated inactivation of GSK-3 kinase. Both pathways seem to involve interactions with G-proteins. May be involved in transduction and intercellular transmission of polarity information during tissue morphogenesis and/or in differentiated tissues. Together with FZD3, is involved in the neural tube closure and plays a role in the regulation of the establishment of planar cell polarity (PCP), particularly in the orientation of asymmetric bundles of stereocilia on the apical faces of a subset of auditory and vestibular sensory cells located in the inner ear. In Homo sapiens (Human), this protein is Frizzled-6 (FZD6).